The sequence spans 404 residues: Double-stranded RNA-binding protein 5 (404 aa).

2 consecutive DRBM domains span residues 1–70 and 87–155; these read MYKN…RLSL and VYKN…SLKQ. Disordered regions lie at residues 195–236, 263–320, and 336–362; these read RRRR…STEE, GGRT…RRNA, and RRRP…FSDP. Positions 263-280 are enriched in low complexity; sequence GGRTQDTASPAPAAAAAS. Basic residues predominate over residues 302-316; the sequence is AGAHAARRHAARQGG.

In terms of biological role, binds double-stranded RNA. The sequence is that of Double-stranded RNA-binding protein 5 (DRB5) from Oryza sativa subsp. japonica (Rice).